The chain runs to 433 residues: O-methyltransferase aclM (433 aa).

Residues 5–37 (LTDAERTALQTSLEALNRQVEATRNILRSNSQK) adopt a coiled-coil conformation. Residues D277 and 311–313 (GDF) each bind S-adenosyl-L-methionine. Residue H330 is the Proton acceptor of the active site.

It belongs to the class I-like SAM-binding methyltransferase superfamily. Cation-independent O-methyltransferase family. COMT subfamily.

Its pathway is mycotoxin biosynthesis. In terms of biological role, O-methyltransferase; part of the gene cluster that mediates the biosynthesis of aspirochlorine (or antibiotic A30641), an unusual halogenated spiro compound with distinctive antifungal properties due to selective inhibition of protein biosynthesis, and which is also active against bacteria, viruses, and murine tumor cells. The non-ribosomal peptide synthetase (NRPS) aclP is responsible the formation of the diketopiperazine (DKP) core from the condensation of 2 phenylalanine residues. One Phe residue is tailored into chlorotyrosine by hydroxylation and chlorination, whereas the second Phe undergoes an unprecedented C-C bond cleavage to be converted into glycine. After formation of the DKP, sulfur is incorporated into the DKP by conjugation with glutathione by aclG, followed by its stepwise degradation to the thiol by aclI, aclJ and aclK, and the dithiol oxidation by aclT. In addition, oxygenases (aclB, aclC, aclL and aclO) and O-methyltransferases (aclM and aclU) act as tailoring enzymes to produce the intermediate dechloroaspirochlorine. Ultimately, chlorination of dechloroaspirochlorine by the halogenase aclH is the last step in the aspirochlorine pathway. The sequence is that of O-methyltransferase aclM from Aspergillus oryzae (strain ATCC 42149 / RIB 40) (Yellow koji mold).